A 96-amino-acid polypeptide reads, in one-letter code: Large ribosomal subunit protein eL14 (96 aa).

This sequence belongs to the eukaryotic ribosomal protein eL14 family.

The protein is Large ribosomal subunit protein eL14 of Saccharolobus islandicus (strain M.14.25 / Kamchatka #1) (Sulfolobus islandicus).